The primary structure comprises 350 residues: Small ribosomal subunit biogenesis GTPase RsgA (350 aa).

Over residues 1–17 the composition is skewed to polar residues; sequence MSKNKLSKGQQRRVQAN. Positions 1 to 35 are disordered; that stretch reads MSKNKLSKGQQRRVQANHQRRLRTDRKPELDDSQL. A CP-type G domain is found at 103–273; it reads TSVLTRPDLY…VIDSPGVREF (171 aa). Residues 159–162 and 213–221 contribute to the GTP site; these read NKID and GQSGVGKSS. Residues C297, C302, H304, and C310 each coordinate Zn(2+).

Belongs to the TRAFAC class YlqF/YawG GTPase family. RsgA subfamily. In terms of assembly, monomer. Associates with 30S ribosomal subunit, binds 16S rRNA. Zn(2+) is required as a cofactor.

Its subcellular location is the cytoplasm. Its function is as follows. One of several proteins that assist in the late maturation steps of the functional core of the 30S ribosomal subunit. Helps release RbfA from mature subunits. May play a role in the assembly of ribosomal proteins into the subunit. Circularly permuted GTPase that catalyzes slow GTP hydrolysis, GTPase activity is stimulated by the 30S ribosomal subunit. The polypeptide is Small ribosomal subunit biogenesis GTPase RsgA (Yersinia enterocolitica serotype O:8 / biotype 1B (strain NCTC 13174 / 8081)).